Consider the following 96-residue polypeptide: Secreted RxLR effector protein 123 (96 aa).

The N-terminal stretch at 1–22 (MVGAYYVGIALLVAGGSQTAAG) is a signal peptide. Positions 49 to 70 (RFLRKSRNPKDNLMLSEANEER) match the RxLR-dEER motif. The segment at 57-96 (PKDNLMLSEANEERTPSSPSNSLTEFIVSEPITTNVMRTE) is disordered. Polar residues predominate over residues 87-96 (PITTNVMRTE).

Belongs to the RxLR effector family.

It is found in the secreted. Its subcellular location is the host nucleus. The protein localises to the host cytoplasm. In terms of biological role, secreted effector that dos not suppress the host cell death induced by cell death-inducing proteins. This chain is Secreted RxLR effector protein 123, found in Plasmopara viticola (Downy mildew of grapevine).